We begin with the raw amino-acid sequence, 753 residues long: 5-methyltetrahydropteroyltriglutamate--homocysteine methyltransferase (753 aa).

5-methyltetrahydropteroyltri-L-glutamate is bound by residues 17–20 (RELK) and lysine 117. L-homocysteine contacts are provided by residues 431 to 433 (IGS) and glutamate 484. L-methionine is bound by residues 431-433 (IGS) and glutamate 484. 5-methyltetrahydropteroyltri-L-glutamate is bound by residues 515–516 (RC) and tryptophan 561. L-homocysteine is bound at residue aspartate 599. An L-methionine-binding site is contributed by aspartate 599. Glutamate 605 is a binding site for 5-methyltetrahydropteroyltri-L-glutamate. 3 residues coordinate Zn(2+): histidine 641, cysteine 643, and glutamate 665. Residue histidine 694 is the Proton donor of the active site. Residue cysteine 726 coordinates Zn(2+).

This sequence belongs to the vitamin-B12 independent methionine synthase family. Zn(2+) is required as a cofactor.

The catalysed reaction is 5-methyltetrahydropteroyltri-L-glutamate + L-homocysteine = tetrahydropteroyltri-L-glutamate + L-methionine. It functions in the pathway amino-acid biosynthesis; L-methionine biosynthesis via de novo pathway; L-methionine from L-homocysteine (MetE route): step 1/1. Its function is as follows. Catalyzes the transfer of a methyl group from 5-methyltetrahydrofolate to homocysteine resulting in methionine formation. This is 5-methyltetrahydropteroyltriglutamate--homocysteine methyltransferase from Escherichia coli O157:H7 (strain EC4115 / EHEC).